The primary structure comprises 801 residues: Interleukin-4 receptor subunit alpha (801 aa).

The first 25 residues, 1-25, serve as a signal peptide directing secretion; it reads MGWLCTKFLSSVSCLILLWVTGSGG. Residues 26 to 232 are Extracellular-facing; the sequence is IKVLGDPTCF…NHFQLPLLQR (207 aa). A disulfide bond links C34 and C44. N-linked (GlcNAc...) asparagine glycosylation is present at N71. Cysteines 74 and 86 form a disulfide. Positions 125 to 223 constitute a Fibronectin type-III domain; the sequence is APDNLTLHTN…EWSPSITWYN (99 aa). N-linked (GlcNAc...) asparagine glycosylation is found at N128, N134, and N162. The residue at position 164 (S164) is a Phosphoserine. N176 carries N-linked (GlcNAc...) asparagine glycosylation. Residues 212–216 carry the WSXWS motif motif; it reads WSEWS. A helical transmembrane segment spans residues 233 to 256; the sequence is LPLGVSISCICILLFCLTCYFSII. At 257-801 the chain is on the cytoplasmic side; sequence KIKKIWWDQI…PVGTLGVTVS (545 aa). A Box 1 motif motif is present at residues 262-270; it reads WWDQIPTPA. A disordered region spans residues 424–476; that stretch reads VGQSSMAESSSLLPSESGQASTSWACFPTGPSETTCQVTGQQPPHPDPERATG. Residues 426–444 show a composition bias toward low complexity; sequence QSSMAESSSLLPSESGQAS. The tract at residues 439 to 549 is required for IRS1 activation and IL4-induced cell growth; the sequence is ESGQASTSWA…ESWEQILHMS (111 aa). Residues 454–465 show a composition bias toward polar residues; that stretch reads PSETTCQVTGQQ. Residue Y492 is modified to Phosphotyrosine. The interval 493–515 is disordered; it reads RSFSDFSSPAPNPGELASEQKQA. The required for IL4-induced gene expression stretch occupies residues 549 to 644; that stretch reads SVLQHGTAGS…NSMPLFTFGL (96 aa). Residues Y566, Y594, and Y622 each carry the phosphotyrosine modification. An ITIM motif motif is present at residues 698 to 703; sequence IVYSSL. A disordered region spans residues 767-801; it reads RTPSNLSGVGKGPGHSPVPSQTTEVPVGTLGVTVS.

The protein belongs to the type I cytokine receptor family. Type 4 subfamily. As to quaternary structure, the functional IL4 receptor is formed by initial binding of IL4 to IL4R. Subsequent recruitment to the complex of the common gamma chain, in immune cells, creates a type I receptor and, in non-immune cells, of IL13RA1 forms a type II receptor. IL4R can also interact with the IL13/IL13RA1 complex to form a similar type II receptor. Interacts with PIK3C3. Interacts with the SH2-containing phosphatases, PTPN6/SHIP1, PTPN11/SHIP2 and INPP5D/SHIP. Interacts with JAK1 through a Box 1-containing region; inhibited by SOCS5. Interacts with SOCS5; inhibits IL4 signaling. Interacts with JAK3. Interacts with CLM1. Interacts with IL13RA2. Post-translationally, on IL4 binding, phosphorylated on C-terminal tyrosine residues. In terms of tissue distribution, isoform 2 is expressed in kidney, spleen, lung and liver.

It is found in the cell membrane. Its subcellular location is the secreted. Its function is as follows. Receptor for both interleukin 4 and interleukin 13. Couples to the JAK1/2/3-STAT6 pathway. The IL4 response is involved in promoting Th2 differentiation. The IL4/IL13 responses are involved in regulating IgE production and, chemokine and mucus production at sites of allergic inflammation. In certain cell types, can signal through activation of insulin receptor substrates, IRS1/IRS2. In terms of biological role, isoform 2 (soluble form) inhibits IL4-induced spleen cell proliferation. This chain is Interleukin-4 receptor subunit alpha (Il4r), found in Rattus norvegicus (Rat).